A 472-amino-acid polypeptide reads, in one-letter code: Divinyl ether synthase CYP74 (472 aa).

Cysteine 425 is a heme binding site.

This sequence belongs to the cytochrome P450 family. The cofactor is heme. In terms of tissue distribution, expressed mainly in bulbs, and at lower levels in roots.

It catalyses the reaction (13S)-hydroperoxy-(9Z,11E)-octadecadienoate = etheroleate + H2O. The catalysed reaction is (13S)-hydroperoxy-(9Z,11E,15Z)-octadecatrienoate = etherolenate + H2O. It carries out the reaction (9S)-hydroperoxy-(10E,12Z)-octadecadienoate = colneleate + H2O. The enzyme catalyses (9S)-hydroperoxy-(10E,12Z,15Z)-octadecatrienoate = colnelenate + H2O. It functions in the pathway lipid metabolism; oxylipin biosynthesis. Divinyl ether synthase involved in oxylipin biosynthesis. Catalyzes the conversion of (13S)-hydroperoxy-(9Z,11E)-octadecadienoate (13-HPOD) to etheroleate and (13S)-hydroperoxy-(9Z,11E,15Z)-octadecatrienoate (13-HPOT) to etherolenate. Catalyzes the conversion of (9S)-hydroperoxy-(10E,12Z)-octadecadienoate (9-HPOD) to colneleate and (9S)-hydroperoxy-(10E,12Z,15Z)-octadecatrienoate (9-HPOT) colnelenate. The chain is Divinyl ether synthase CYP74 from Allium sativum (Garlic).